Here is a 305-residue protein sequence, read N- to C-terminus: Protein FdhE homolog (305 aa).

The protein belongs to the FdhE family.

The protein resides in the cytoplasm. Necessary for formate dehydrogenase activity. This Haemophilus ducreyi (strain 35000HP / ATCC 700724) protein is Protein FdhE homolog.